Reading from the N-terminus, the 446-residue chain is Putative F-box protein At1g32660 (446 aa).

2 stretches are compositionally biased toward basic and acidic residues: residues 1 to 12 (MKRKDDDQEDRS) and 43 to 57 (NKLE…NPSK). Residues 1-57 (MKRKDDDQEDRSCSSASKLDPIPLDLKMATVPTKSHMKKSHQNKLEEDEKEDTNPSK) form a disordered region. Residues 57 to 107 (KLELDSLPLDLKMAILTRIPAKSLMKLRCVSKMWSSIIRSRGFIDSYYAIS) enclose the F-box domain.

This is Putative F-box protein At1g32660 from Arabidopsis thaliana (Mouse-ear cress).